Reading from the N-terminus, the 793-residue chain is Transcription factor opdR (793 aa).

Disordered stretches follow at residues 1–29 (MAQD…DPCR), 60–113 (TASS…QSQN), and 457–476 (LDDE…QPSE). Residues 25-53 (CDPCRRRKVRCDRKFPCGQCERARTALQC) constitute a DNA-binding region (zn(2)-C6 fungal-type).

Its subcellular location is the nucleus. Transcription factor; part of the gene cluster that mediates the biosynthesis of oxopyrrolidines, polyketide-amino acid hybrid compounds with feature structures of tetramic acid. In Penicillium oxalicum (strain 114-2 / CGMCC 5302) (Penicillium decumbens), this protein is Transcription factor opdR.